The primary structure comprises 875 residues: DNA topoisomerase 3-beta (875 aa).

Residues 3–153 enclose the Toprim domain; the sequence is SVLMVAEKPS…QVTYRAHFSA (151 aa). Positions 170–589 constitute a Topo IA-type catalytic domain; that stretch reads NENEAKSVDA…AIKIFKLKFM (420 aa). The active-site O-(5'-phospho-DNA)-tyrosine intermediate is Tyr-332. Positions 371 to 391 are disordered; the sequence is QTPRKGKDAGDHPPITPMKLG.

It belongs to the type IA topoisomerase family.

It carries out the reaction ATP-independent breakage of single-stranded DNA, followed by passage and rejoining.. Functionally, releases the supercoiling and torsional tension of DNA introduced during the DNA replication and transcription by transiently cleaving and rejoining one strand of the DNA duplex. Introduces a single-strand break via transesterification at a target site in duplex DNA. The scissile phosphodiester is attacked by the catalytic tyrosine of the enzyme, resulting in the formation of a DNA-(5'-phosphotyrosyl)-enzyme intermediate and the expulsion of a 3'-OH DNA strand. The free DNA strand than undergoes passage around the unbroken strand thus removing DNA supercoils. Finally, in the religation step, the DNA 3'-OH attacks the covalent intermediate to expel the active-site tyrosine and restore the DNA phosphodiester backbone. Weakly relaxes negative supercoils and displays a distinct preference for binding single-stranded DNA. This is DNA topoisomerase 3-beta (Top3beta) from Drosophila melanogaster (Fruit fly).